The primary structure comprises 239 residues: tRNA (guanine-N(1)-)-methyltransferase (239 aa).

S-adenosyl-L-methionine-binding positions include Gly108 and 128–133 (VGNFIV).

It belongs to the RNA methyltransferase TrmD family. Homodimer.

The protein localises to the cytoplasm. It carries out the reaction guanosine(37) in tRNA + S-adenosyl-L-methionine = N(1)-methylguanosine(37) in tRNA + S-adenosyl-L-homocysteine + H(+). Its function is as follows. Specifically methylates guanosine-37 in various tRNAs. The sequence is that of tRNA (guanine-N(1)-)-methyltransferase from Helicobacter hepaticus (strain ATCC 51449 / 3B1).